The chain runs to 531 residues: Cytochrome c oxidase subunit 1 (531 aa).

Residues 18-38 form a helical membrane-spanning segment; sequence ILYLIYGMVSAMVATGMSVII. 2 residues coordinate Ca(2+): E41 and G46. 6 helical membrane-spanning segments follow: residues 59–79, 103–123, 149–169, 185–205, 237–257, and 269–289; these read VLVTGHAIAMIFLFVMPILIG, ISFWCLPPALVCVIASVLIET, AIFAIHLTSISSLLGAINFIV, PLFVWAIFFTAILLLLSLPVL, LFYFFGHPEVYIIIIPGFGII, and IFGQIGMIYAIGSIGLLGFLV. H64 is a binding site for Fe(II)-heme a. H243 serves as a coordination point for Cu cation. Residues 243 to 247 constitute a cross-link (1'-histidyl-3'-tyrosine (His-Tyr)); the sequence is HPEVY. O2 is bound at residue Y247. 2 residues coordinate Cu cation: H292 and H293. 2 helical membrane passes run 312–332 and 340–360; these read MVIAIPTGIKIFSWLATLYGG and MLFALGFLFLFTIGGLTGVML. Mg(2+) contacts are provided by H370 and D371. Residue H378 participates in heme a3 binding. Position 380 (H380) interacts with Fe(II)-heme a. A run of 2 helical transmembrane segments spans residues 385–405 and 414–434; these read MGALFSLIAGYYYWGPAMFGL and VHYWLLFVSVNIIFLPMHFLG. P443 provides a ligand contact to Ca(2+). Residues 458–478 traverse the membrane as a helical segment; sequence WGSIMSVISVLIGLYSVLVQL.

The protein belongs to the heme-copper respiratory oxidase family. As to quaternary structure, component of the cytochrome c oxidase (complex IV, CIV), a multisubunit enzyme composed of a catalytic core of 3 subunits and several supernumerary subunits. The complex exists as a monomer or a dimer and forms supercomplexes (SCs) in the inner mitochondrial membrane with ubiquinol-cytochrome c oxidoreductase (cytochrome b-c1 complex, complex III, CIII). Heme serves as cofactor. Cu cation is required as a cofactor.

The protein resides in the mitochondrion inner membrane. It carries out the reaction 4 Fe(II)-[cytochrome c] + O2 + 8 H(+)(in) = 4 Fe(III)-[cytochrome c] + 2 H2O + 4 H(+)(out). The protein operates within energy metabolism; oxidative phosphorylation. Its function is as follows. Component of the cytochrome c oxidase, the last enzyme in the mitochondrial electron transport chain which drives oxidative phosphorylation. The respiratory chain contains 3 multisubunit complexes succinate dehydrogenase (complex II, CII), ubiquinol-cytochrome c oxidoreductase (cytochrome b-c1 complex, complex III, CIII) and cytochrome c oxidase (complex IV, CIV), that cooperate to transfer electrons derived from NADH and succinate to molecular oxygen, creating an electrochemical gradient over the inner membrane that drives transmembrane transport and the ATP synthase. Cytochrome c oxidase is the component of the respiratory chain that catalyzes the reduction of oxygen to water. Electrons originating from reduced cytochrome c in the intermembrane space (IMS) are transferred via the dinuclear copper A center (CU(A)) of subunit 2 and heme A of subunit 1 to the active site in subunit 1, a binuclear center (BNC) formed by heme A3 and copper B (CU(B)). The BNC reduces molecular oxygen to 2 water molecules using 4 electrons from cytochrome c in the IMS and 4 protons from the mitochondrial matrix. The protein is Cytochrome c oxidase subunit 1 (COX1) of Candida albicans (strain SC5314 / ATCC MYA-2876) (Yeast).